The primary structure comprises 127 residues: Anti-adapter protein IraD (127 aa).

The protein belongs to the GpW/Gp25 family. IraD subfamily. Interacts with RssB.

Its subcellular location is the cytoplasm. Inhibits RpoS proteolysis by regulating RssB activity, thereby increasing the stability of the sigma stress factor RpoS during oxidative stress. Its effect on RpoS stability is due to its interaction with RssB, which probably blocks the interaction of RssB with RpoS, and the consequent delivery of the RssB-RpoS complex to the ClpXP protein degradation pathway. The sequence is that of Anti-adapter protein IraD from Escherichia coli O127:H6 (strain E2348/69 / EPEC).